The primary structure comprises 128 residues: Sm-like protein LSM1A (128 aa).

One can recognise a Sm domain in the interval 10-85 (FFSTSLAAYL…VVLIGELDVE (76 aa)).

It belongs to the snRNP Sm proteins family. Component of the heptameric LSM1-LSM7 complex that forms a seven-membered ring structure with a donut shape. The LSM subunits are arranged in the order LSM1, LSM2, LSM3, LSM6, LSM5, LSM7 and LSM4. LSM1A subunit interacts only with its two neighboring subunits, LSM2 and LSM4. As to expression, expressed in roots, leaves, stems, flowers and siliques.

The protein resides in the cytoplasm. The protein localises to the P-body. Functionally, component of the cytoplasmic LSM1-LSM7 complex which is involved in mRNA degradation by promoting decapping and leading to accurate 5'-3' mRNA decay. LSM1A and LSM1B are essential for the formation of the cytoplasmic LSM1-LSM7 complex which regulates developmental gene expression by the decapping of specific development-related transcripts. Required for P-body formation during heat stress. This is Sm-like protein LSM1A from Arabidopsis thaliana (Mouse-ear cress).